Consider the following 228-residue polypeptide: UPF0758 protein stu1465 (228 aa).

The 123-residue stretch at 103–225 (QIMSSQQVAR…YYSFREERED (123 aa)) folds into the MPN domain. Zn(2+) is bound by residues His-174, His-176, and Asp-187. The JAMM motif motif lies at 174–187 (HNHPSGEAYPSRND).

The protein belongs to the UPF0758 family.

This chain is UPF0758 protein stu1465, found in Streptococcus thermophilus (strain ATCC BAA-250 / LMG 18311).